Here is a 190-residue protein sequence, read N- to C-terminus: Putative hydrolase YdeN (190 aa).

Catalysis depends on charge relay system residues serine 71, aspartate 137, and histidine 164.

This sequence belongs to the RBBP9 family.

This Bacillus subtilis (strain 168) protein is Putative hydrolase YdeN (ydeN).